A 416-amino-acid polypeptide reads, in one-letter code: Trehalose synthase (416 aa).

Belongs to the glycosyltransferase group 1 family. Glycosyltransferase 4 subfamily. In terms of assembly, homodimer. Mg(2+) is required as a cofactor.

The enzyme catalyses an NDP-alpha-D-glucose + D-glucose = alpha,alpha-trehalose + a ribonucleoside 5'-diphosphate + H(+). Inhibited by 20 mM Fe(3+) and Mn(2+). Partially inhibited by Zn(2+) and Ni(2+). Activity is slightly enhanced by 2 mM Fe (3+), Mn (2+), Ca(2+) or Li(+) and by 20 mM Mg(2+), Ca(2+) or Li(+). Functionally, synthesizes trehalose from ADP-glucose and glucose. The reaction is reversible, the equilibrium strongly favors trehalose synthesis. The sequence is that of Trehalose synthase from Rubrobacter xylanophilus (strain DSM 9941 / JCM 11954 / NBRC 16129 / PRD-1).